A 3130-amino-acid chain; its full sequence is DNA polymerase zeta catalytic subunit (3130 aa).

Disordered stretches follow at residues 263 to 295, 425 to 457, 487 to 510, 524 to 548, 697 to 728, and 817 to 871; these read AIWE…VPAT, GYRG…NEPQ, LCRN…MEWS, LDGT…SSVI, PNEN…EKGN, and VTYK…EKDN. The span at 286–295 shows a compositional bias: basic and acidic residues; that stretch reads SQDHRFVPAT. Positions 497–509 are enriched in acidic residues; it reads EDDDSSSGEEMEW. 2 stretches are compositionally biased toward polar residues: residues 533–548 and 699–728; these read DNPL…SSVI and ENTL…EKGN. A compositionally biased stretch (basic residues) spans 828 to 838; it reads SRLKLNKRKLA. The segment covering 842–854 has biased composition (low complexity); the sequence is ETSTKSSETGSTK. A compositionally biased stretch (polar residues) spans 855–866; sequence DNFIQNNPCNSN. Ser1030 carries the phosphoserine modification. 3 disordered regions span residues 1035–1095, 1162–1231, and 1537–1600; these read YPIY…YNAE, SRIG…DEKI, and RQQK…KLLK. Thr1041 is subject to Phosphothreonine. Basic residues-rich tracts occupy residues 1043–1061 and 1166–1179; these read KKSH…KTGK and KTSR…KSKA. The segment covering 1213–1231 has biased composition (basic and acidic residues); sequence KTNEKGTSRKHTTLKDEKI. Polar residues predominate over residues 1540-1565; that stretch reads KAQNANTTQDPLSNKHQPNKNISGSL. The segment covering 1570-1589 has biased composition (basic residues); it reads ANKRTRSVTSPRKPRTPRST. The segment covering 1590-1600 has biased composition (basic and acidic residues); it reads KQKEKIPKLLK. Residue Ser1724 is modified to Phosphoserine. 5 disordered regions span residues 1845-1882, 1962-1984, 2017-2050, 2080-2150, and 2216-2236; these read NDML…KPLM, NPRP…SNSP, ERSK…PVVP, PTTG…SPVE, and APGL…NKKG. The tract at residues 1847-1898 is mediates interaction with MAD2L2; that stretch reads MLTPTPDSSPRSTSSPSQSKNGSFTPRTANILKPLMSPPSREEIMATLLDHD. The segment covering 1849–1865 has biased composition (low complexity); it reads TPTPDSSPRSTSSPSQS. Phosphoserine is present on Ser1967. Polar residues predominate over residues 2080–2092; it reads PTTGCSQTASESQ. Residues 2113-2122 show a composition bias toward low complexity; the sequence is YYISYSSPDS. Residues 2221–2236 are compositionally biased toward polar residues; the sequence is PLSTEPKTQKLSNKKG. 4 residues coordinate Zn(2+): Cys3042, Cys3045, Cys3054, and Cys3057. The segment at 3042 to 3057 adopts a CysA-type zinc-finger fold; the sequence is CPVCDDLTQHGICSKC. [4Fe-4S] cluster-binding residues include Cys3086, Cys3089, Cys3099, and Cys3104. The CysB motif signature appears at 3086 to 3104; the sequence is CKNCTGCFDRHIPCVSLNC.

It belongs to the DNA polymerase type-B family. Heterodimer with MAD2L2. This dimer forms the minimal DNA polymerase zeta complex (Pol-zeta2), with REV3L bearing DNA polymerase catalytic activity, although its activity is very low in this context. Component of the tetrameric Pol-zeta complex (Pol-zeta4), which consists of REV3L, MAD2L2, POLD2 and POLD3; Pol-zeta4 is the fully active form of DNA polymerase zeta. The cofactor is [4Fe-4S] cluster. In terms of tissue distribution, ubiquitously expressed.

The protein resides in the nucleus. The catalysed reaction is DNA(n) + a 2'-deoxyribonucleoside 5'-triphosphate = DNA(n+1) + diphosphate. Its function is as follows. Catalytic subunit of the DNA polymerase zeta complex, an error-prone polymerase specialized in translesion DNA synthesis (TLS). Lacks an intrinsic 3'-5' exonuclease activity and thus has no proofreading function. This chain is DNA polymerase zeta catalytic subunit (REV3L), found in Homo sapiens (Human).